We begin with the raw amino-acid sequence, 147 residues long: MVHLTPEEKALVIGLWAKVNVKEYGGEALGRLLVVYPWTQRFFEHFGDLSSASAIMNNPKVKAHGEKVFTSFGDGLKHLEDLKGAFAELSELHCDKLHVDPENFRLLGNVLVCVLARHFGKEFSPEAQAAYQKVVAGVANALAHKYH.

The Globin domain maps to 3 to 147 (HLTPEEKALV…VANALAHKYH (145 aa)). Ser-51 carries the phosphoserine modification. Heme b contacts are provided by His-64 and His-93.

This sequence belongs to the globin family. As to quaternary structure, heterotetramer of two delta chains and two alpha chains. In terms of tissue distribution, red blood cells.

This is Hemoglobin subunit delta (HBD) from Trichechus manatus (Caribbean manatee).